The chain runs to 339 residues: Basic membrane protein A (339 aa).

Positions 1 to 17 are cleaved as a signal peptide; it reads MNKILLLILLESIVFLS. Residue C18 is the site of N-palmitoyl cysteine attachment. C18 carries S-diacylglycerol cysteine lipidation.

It belongs to the BMP lipoprotein family. Monomer.

Its subcellular location is the cell inner membrane. Its function is as follows. Immunogenic protein. May be part of an ABC-type nucleoside uptake system involved in the purine salvage pathway. The chain is Basic membrane protein A (bmpA) from Borreliella burgdorferi (strain ATCC 35210 / DSM 4680 / CIP 102532 / B31) (Borrelia burgdorferi).